The chain runs to 1059 residues: Carbamoyl phosphate synthase large chain (1059 aa).

The segment at 1–401 (MPKRKDIQKV…AMLKAVRSLE (401 aa)) is carboxyphosphate synthetic domain. Arg-129, Arg-169, Gly-175, Gly-176, Arg-208, Ile-210, Glu-215, Gly-241, Val-242, His-243, Gln-284, and Glu-298 together coordinate ATP. In terms of domain architecture, ATP-grasp 1 spans 133–327 (KALMERLNEP…IAKMAAKIAV (195 aa)). Gln-284, Glu-298, and Asn-300 together coordinate Mg(2+). Gln-284, Glu-298, and Asn-300 together coordinate Mn(2+). Residues 402-546 (IGVTGLNDLT…YATYERENES (145 aa)) are oligomerization domain. A carbamoyl phosphate synthetic domain region spans residues 547 to 929 (VRSKKPSVIV…ALYKAFVASN (383 aa)). The 191-residue stretch at 671 to 861 (DQVIKTLALP…LAQLATRVML (191 aa)) folds into the ATP-grasp 2 domain. Arg-707, Ser-746, Leu-748, Glu-752, Gly-777, Val-778, His-779, Ser-780, Gln-820, and Glu-832 together coordinate ATP. Mg(2+) contacts are provided by Gln-820, Glu-832, and Asn-834. Gln-820, Glu-832, and Asn-834 together coordinate Mn(2+). In terms of domain architecture, MGS-like spans 930-1059 (IKVPQYGNVL…SRSFTVNEMK (130 aa)). The allosteric domain stretch occupies residues 930-1059 (IKVPQYGNVL…SRSFTVNEMK (130 aa)).

The protein belongs to the CarB family. In terms of assembly, composed of two chains; the small (or glutamine) chain promotes the hydrolysis of glutamine to ammonia, which is used by the large (or ammonia) chain to synthesize carbamoyl phosphate. Tetramer of heterodimers (alpha,beta)4. Requires Mg(2+) as cofactor. Mn(2+) serves as cofactor.

It carries out the reaction hydrogencarbonate + L-glutamine + 2 ATP + H2O = carbamoyl phosphate + L-glutamate + 2 ADP + phosphate + 2 H(+). The enzyme catalyses hydrogencarbonate + NH4(+) + 2 ATP = carbamoyl phosphate + 2 ADP + phosphate + 2 H(+). It participates in amino-acid biosynthesis; L-arginine biosynthesis; carbamoyl phosphate from bicarbonate: step 1/1. Its pathway is pyrimidine metabolism; UMP biosynthesis via de novo pathway; (S)-dihydroorotate from bicarbonate: step 1/3. Large subunit of the glutamine-dependent carbamoyl phosphate synthetase (CPSase). CPSase catalyzes the formation of carbamoyl phosphate from the ammonia moiety of glutamine, carbonate, and phosphate donated by ATP, constituting the first step of 2 biosynthetic pathways, one leading to arginine and/or urea and the other to pyrimidine nucleotides. The large subunit (synthetase) binds the substrates ammonia (free or transferred from glutamine from the small subunit), hydrogencarbonate and ATP and carries out an ATP-coupled ligase reaction, activating hydrogencarbonate by forming carboxy phosphate which reacts with ammonia to form carbamoyl phosphate. This chain is Carbamoyl phosphate synthase large chain, found in Leuconostoc citreum (strain KM20).